Here is a 315-residue protein sequence, read N- to C-terminus: Glutathione synthetase (315 aa).

The region spanning 125-310 is the ATP-grasp domain; sequence KLFTAWFSDL…ITGMLMDAIE (186 aa). 151-207 is a binding site for ATP; that stretch reads WEKHSDIILKPLDGMGGASIFRVKEGDPNLGVIAETLTEHGTRYCMAQNYLPAIKDG. 2 residues coordinate Mg(2+): Glu-281 and Asn-283.

This sequence belongs to the prokaryotic GSH synthase family. Mg(2+) serves as cofactor. Requires Mn(2+) as cofactor.

It carries out the reaction gamma-L-glutamyl-L-cysteine + glycine + ATP = glutathione + ADP + phosphate + H(+). It functions in the pathway sulfur metabolism; glutathione biosynthesis; glutathione from L-cysteine and L-glutamate: step 2/2. In Escherichia coli O157:H7, this protein is Glutathione synthetase.